A 299-amino-acid polypeptide reads, in one-letter code: Tyrosine recombinase XerC (299 aa).

The Core-binding (CB) domain occupies 1–85 (MDQHLDAYCM…AVRGFYKYLN (85 aa)). The Tyr recombinase domain occupies 106-285 (RLPKTLDTDR…DFQHLATVYD (180 aa)). Residues Arg146, Lys170, His237, Arg240, and His263 contribute to the active site. The active-site O-(3'-phospho-DNA)-tyrosine intermediate is the Tyr272.

Belongs to the 'phage' integrase family. XerC subfamily. In terms of assembly, forms a cyclic heterotetrameric complex composed of two molecules of XerC and two molecules of XerD.

The protein resides in the cytoplasm. Site-specific tyrosine recombinase, which acts by catalyzing the cutting and rejoining of the recombining DNA molecules. The XerC-XerD complex is essential to convert dimers of the bacterial chromosome into monomers to permit their segregation at cell division. It also contributes to the segregational stability of plasmids. The polypeptide is Tyrosine recombinase XerC (Pseudomonas syringae pv. syringae (strain B728a)).